A 286-amino-acid polypeptide reads, in one-letter code: Pyridoxal kinase PdxY (286 aa).

Substrate is bound by residues Ser9 and 44–45 (MQ). Asp111, Glu147, and Lys180 together coordinate ATP. Asp221 lines the substrate pocket.

Belongs to the pyridoxine kinase family. PdxY subfamily. As to quaternary structure, homodimer. Mg(2+) is required as a cofactor.

The enzyme catalyses pyridoxal + ATP = pyridoxal 5'-phosphate + ADP + H(+). The protein operates within cofactor metabolism; pyridoxal 5'-phosphate salvage; pyridoxal 5'-phosphate from pyridoxal: step 1/1. In terms of biological role, pyridoxal kinase involved in the salvage pathway of pyridoxal 5'-phosphate (PLP). Catalyzes the phosphorylation of pyridoxal to PLP. The chain is Pyridoxal kinase PdxY from Burkholderia lata (strain ATCC 17760 / DSM 23089 / LMG 22485 / NCIMB 9086 / R18194 / 383).